The following is a 28-amino-acid chain: Flagellar filament 34 kDa core protein (28 aa).

Belongs to the bacterial flagellin family. In terms of assembly, the flagellum consists of an outer layer composed of repeating units of FlaA around a core that contains several antigenically related polypeptides.

It is found in the periplasmic flagellum. It localises to the periplasm. In terms of biological role, component of the core of the flagella. This chain is Flagellar filament 34 kDa core protein, found in Treponema phagedenis.